Reading from the N-terminus, the 350-residue chain is tRNA pseudouridine synthase D (350 aa).

Asp-85 (nucleophile) is an active-site residue. The TRUD domain maps to 160–310 (GVINYFGEQR…EAARRTILLR (151 aa)).

It belongs to the pseudouridine synthase TruD family.

The enzyme catalyses uridine(13) in tRNA = pseudouridine(13) in tRNA. Its function is as follows. Responsible for synthesis of pseudouridine from uracil-13 in transfer RNAs. This chain is tRNA pseudouridine synthase D, found in Idiomarina loihiensis (strain ATCC BAA-735 / DSM 15497 / L2-TR).